The primary structure comprises 397 residues: MWWLLVTVCFIHMSGNAFCFLGKIAKNPEASMNVSQMISYWGYPSEMHKVITADGYILQVYRIPHGKNNANHLGQRPVVFLQHGLLGSATNWISNLPKNSLGFLLADAGYDVWLGNSRGNTWAQEHLYYSPDSPEFWAFSFDEMAEYDLPSTIDFILRRTGQKKLHYVGHSQGTTIGFIAFSTSPTLAEKIKVFYALAPVATVKYTKSLFNKLALIPHFLFKIIFGDKMFYPHTFLEQFLGVEMCSRETLDVLCKNALFAITGVDNKNFNMSRLDVYIAHNPAGTSVQNTLHWRQAVKSGKFQAFDWGAPYQNLMHYHQPTPPIYNLTAMNVPIAVWSADNDLLADPQDVDFLLSKLSNLIYHKEIPNYNHLDFIWAMDAPQEVYNEIVSLMAEDKK.

The N-terminal stretch at 1-19 (MWWLLVTVCFIHMSGNAFC) is a signal peptide. An N-linked (GlcNAc...) asparagine glycan is attached at N33. An AB hydrolase-1 domain is found at 77–376 (PVVFLQHGLL…PNYNHLDFIW (300 aa)). S171 serves as the catalytic Nucleophile. Residues C245 and C254 are joined by a disulfide bond. N-linked (GlcNAc...) asparagine glycans are attached at residues N270 and N326. Active-site charge relay system residues include D342 and H371.

It belongs to the AB hydrolase superfamily. Lipase family.

Its subcellular location is the secreted. It carries out the reaction a triacylglycerol + H2O = a diacylglycerol + a fatty acid + H(+). The catalysed reaction is 1,2,3-tri-(9Z-octadecenoyl)-glycerol + H2O = 1,2-di-(9Z-octadecenoyl)-sn-glycerol + (9Z)-octadecenoate + H(+). It catalyses the reaction 1,2,3-trioctanoylglycerol + H2O = 1,2-dioctanoyl-sn-glycerol + octanoate + H(+). Its activity is regulated as follows. Inhibited by diethylp-nitrophenyl phosphate but not inhibited by thiol reagents 5,5'-dithiobis(2-nitrobenzoic acid) or 4,4'-dithiopyridine. Its function is as follows. Catalyzes the hydrolysis of triacylglycerols to yield free fatty acids, diacylglycerol, monoacylglycerol, and glycerol. Shows a preferential hydrolysis at the sn-3 position of triacylglycerol. This chain is Gastric triacylglycerol lipase (LIPF), found in Bos taurus (Bovine).